The following is a 507-amino-acid chain: Histidine ammonia-lyase (507 aa).

The segment at residues 141 to 143 is a cross-link (5-imidazolinone (Ala-Gly)); the sequence is ASG. 2,3-didehydroalanine (Ser) is present on Ser-142.

Belongs to the PAL/histidase family. Contains an active site 4-methylidene-imidazol-5-one (MIO), which is formed autocatalytically by cyclization and dehydration of residues Ala-Ser-Gly.

Its subcellular location is the cytoplasm. It catalyses the reaction L-histidine = trans-urocanate + NH4(+). The protein operates within amino-acid degradation; L-histidine degradation into L-glutamate; N-formimidoyl-L-glutamate from L-histidine: step 1/3. The polypeptide is Histidine ammonia-lyase (Burkholderia cenocepacia (strain ATCC BAA-245 / DSM 16553 / LMG 16656 / NCTC 13227 / J2315 / CF5610) (Burkholderia cepacia (strain J2315))).